Here is an 800-residue protein sequence, read N- to C-terminus: Ent-copalyl diphosphate synthase 2, chloroplastic (800 aa).

Residues 1 to 47 constitute a chloroplast transit peptide; it reads MQMQVLTAASSLPRATLLRPAAAEPWRQSFLQLQARPIQRPGIMLHC. The tract at residues 52 to 80 is disordered; that stretch reads QGQETRERRQLDDDEHARPPQGGDDDVAA. Over residues 55-69 the composition is skewed to basic and acidic residues; that stretch reads ETRERRQLDDDEHAR. Substrate is bound at residue lysine 242. 2 residues coordinate Mg(2+): aspartate 374 and aspartate 376. Residues 374 to 377 carry the DXDD motif motif; the sequence is DIDD. Substrate is bound at residue lysine 461.

It belongs to the terpene synthase family. The cofactor is Mg(2+).

The protein localises to the plastid. It is found in the chloroplast. The enzyme catalyses (2E,6E,10E)-geranylgeranyl diphosphate = ent-copalyl diphosphate. It functions in the pathway secondary metabolite biosynthesis; terpenoid biosynthesis. Its function is as follows. Catalyzes the conversion of geranylgeranyl diphosphate to the phytoalexin precursor ent-copalyl diphosphate. This chain is Ent-copalyl diphosphate synthase 2, chloroplastic, found in Oryza sativa subsp. japonica (Rice).